Reading from the N-terminus, the 380-residue chain is Cytochrome b (380 aa).

Helical transmembrane passes span 34 to 54 (FGSLLAMCLATQILTGLLLAM), 78 to 99 (WLIRNLHANGASFFFICIFLHI), 114 to 134 (WNTGVILLLTLMATAFVGYVL), and 179 to 199 (FFALHFLLPFVIAGITIIHLI). Heme b-binding residues include histidine 84 and histidine 98. Heme b contacts are provided by histidine 183 and histidine 197. Histidine 202 is a binding site for a ubiquinone. 4 helical membrane passes run 227–247 (LKDILGLTLMLTPLLTLALFS), 289–309 (LGGVLALAASVLILLLIPFLH), 321–341 (LSQTLFWLLVANLLVLTWVGS), and 348–368 (FIIIGQMASFSYFTILLILFP).

The protein belongs to the cytochrome b family. The cytochrome bc1 complex contains 11 subunits: 3 respiratory subunits (MT-CYB, CYC1 and UQCRFS1), 2 core proteins (UQCRC1 and UQCRC2) and 6 low-molecular weight proteins (UQCRH/QCR6, UQCRB/QCR7, UQCRQ/QCR8, UQCR10/QCR9, UQCR11/QCR10 and a cleavage product of UQCRFS1). This cytochrome bc1 complex then forms a dimer. Heme b serves as cofactor.

It is found in the mitochondrion inner membrane. In terms of biological role, component of the ubiquinol-cytochrome c reductase complex (complex III or cytochrome b-c1 complex) that is part of the mitochondrial respiratory chain. The b-c1 complex mediates electron transfer from ubiquinol to cytochrome c. Contributes to the generation of a proton gradient across the mitochondrial membrane that is then used for ATP synthesis. The chain is Cytochrome b (MT-CYB) from Tragopan temminckii (Temminck's tragopan).